The sequence spans 1311 residues: Nephrocystin-3 (1311 aa).

The stretch at 81–183 forms a coiled coil; the sequence is SKNNEIASMQ…LQRLQAQGIQ (103 aa). TPR repeat units lie at residues 889–923, 927–960, 969–1002, 1011–1044, 1077–1110, 1119–1152, 1161–1194, 1203–1236, and 1245–1278; these read LSYW…EEKM, ADLY…RETA, AQSL…SENA, AREL…RQKS, ARTL…RERV, AQSI…RRRA, AYTV…RQKS, ATAL…YEDS, and GETL…KETE.

The protein localises to the cell projection. It is found in the cilium. Required for normal ciliary development and function. Inhibits disheveled-1-induced canonical Wnt-signaling activity and may also play a role in the control of non-canonical Wnt signaling that regulates planar cell polarity. Probably acts as a molecular switch between different Wnt signaling pathways. Required for proper convergent extension cell movements. This is Nephrocystin-3 (nphp3) from Xenopus tropicalis (Western clawed frog).